The sequence spans 304 residues: Galactofuranosyltransferase GlfT1 (304 aa).

The protein belongs to the glycosyltransferase 2 family. Is probably part of an AG biosynthetic complex.

The protein localises to the cell membrane. The protein resides in the secreted. It localises to the cell wall. It carries out the reaction alpha-L-rhamnosyl-(1-&gt;3)-N-acetyl-alpha-D-glucosaminyl-diphospho-trans,octa-cis-decaprenol + 2 UDP-alpha-D-galactofuranose = beta-D-galactofuranosyl-(1-&gt;5)-beta-D-galactofuranosyl-(1-&gt;4)-alpha-L-rhamnosyl-(1-&gt;3)-N-acetyl-alpha-D-glucosaminyl-diphospho-trans,octa-cis-decaprenol + 2 UDP + 2 H(+). Its pathway is cell wall biogenesis; cell wall polysaccharide biosynthesis. Its function is as follows. Involved in the biosynthesis of the arabinogalactan (AG) region of the mycolylarabinogalactan-peptidoglycan (mAGP) complex, an essential component of the mycobacterial cell wall. Catalyzes the transfer of the first two galactofuranosyl (Galf) units from UDP-galactofuranose (UDP-Galf) onto the rhamnosyl-GlcNAc-diphospho-decaprenol (Rha-GlcNAc-PP-C50) acceptor, yielding galactofuranosyl-galactofuranosyl-rhamnosyl-GlcNAc-diphospho-decaprenol (Galf-Galf-Rha-GlcNAc-PP-C50). Thus, GlfT1 is the initiator of galactan synthesis, while GlfT2 continues with the subsequent polymerization events. The polypeptide is Galactofuranosyltransferase GlfT1 (Mycobacterium tuberculosis (strain CDC 1551 / Oshkosh)).